A 227-amino-acid polypeptide reads, in one-letter code: Phosphoribosylformylglycinamidine synthase subunit PurQ (227 aa).

The Glutamine amidotransferase type-1 domain maps to 3–225 (FAVIVFPGSN…LKYWRETYVV (223 aa)). The active-site Nucleophile is Cys-86. Active-site residues include His-194 and Glu-196.

As to quaternary structure, part of the FGAM synthase complex composed of 1 PurL, 1 PurQ and 2 PurS subunits.

Its subcellular location is the cytoplasm. It catalyses the reaction N(2)-formyl-N(1)-(5-phospho-beta-D-ribosyl)glycinamide + L-glutamine + ATP + H2O = 2-formamido-N(1)-(5-O-phospho-beta-D-ribosyl)acetamidine + L-glutamate + ADP + phosphate + H(+). The catalysed reaction is L-glutamine + H2O = L-glutamate + NH4(+). It participates in purine metabolism; IMP biosynthesis via de novo pathway; 5-amino-1-(5-phospho-D-ribosyl)imidazole from N(2)-formyl-N(1)-(5-phospho-D-ribosyl)glycinamide: step 1/2. Part of the phosphoribosylformylglycinamidine synthase complex involved in the purines biosynthetic pathway. Catalyzes the ATP-dependent conversion of formylglycinamide ribonucleotide (FGAR) and glutamine to yield formylglycinamidine ribonucleotide (FGAM) and glutamate. The FGAM synthase complex is composed of three subunits. PurQ produces an ammonia molecule by converting glutamine to glutamate. PurL transfers the ammonia molecule to FGAR to form FGAM in an ATP-dependent manner. PurS interacts with PurQ and PurL and is thought to assist in the transfer of the ammonia molecule from PurQ to PurL. The sequence is that of Phosphoribosylformylglycinamidine synthase subunit PurQ from Bacillus cytotoxicus (strain DSM 22905 / CIP 110041 / 391-98 / NVH 391-98).